A 187-amino-acid polypeptide reads, in one-letter code: Ribosome-recycling factor (187 aa).

Belongs to the RRF family.

It localises to the cytoplasm. Functionally, responsible for the release of ribosomes from messenger RNA at the termination of protein biosynthesis. May increase the efficiency of translation by recycling ribosomes from one round of translation to another. This is Ribosome-recycling factor from Orientia tsutsugamushi (strain Ikeda) (Rickettsia tsutsugamushi).